Here is a 307-residue protein sequence, read N- to C-terminus: UDP-3-O-acyl-N-acetylglucosamine deacetylase (307 aa).

Residues His78, His241, and Asp245 each coordinate Zn(2+). The Proton donor role is filled by His268.

It belongs to the LpxC family. The cofactor is Zn(2+).

It catalyses the reaction a UDP-3-O-[(3R)-3-hydroxyacyl]-N-acetyl-alpha-D-glucosamine + H2O = a UDP-3-O-[(3R)-3-hydroxyacyl]-alpha-D-glucosamine + acetate. It participates in glycolipid biosynthesis; lipid IV(A) biosynthesis; lipid IV(A) from (3R)-3-hydroxytetradecanoyl-[acyl-carrier-protein] and UDP-N-acetyl-alpha-D-glucosamine: step 2/6. In terms of biological role, catalyzes the hydrolysis of UDP-3-O-myristoyl-N-acetylglucosamine to form UDP-3-O-myristoylglucosamine and acetate, the committed step in lipid A biosynthesis. This Polaromonas naphthalenivorans (strain CJ2) protein is UDP-3-O-acyl-N-acetylglucosamine deacetylase.